The primary structure comprises 550 residues: Kinase suppressor of Ras B (550 aa).

2 stretches are compositionally biased toward low complexity: residues 21–56 and 63–75; these read SFSSWRRSSTSGSISQSSRTTSKTTTSSSVTSSNPI and ATSSSSVLPSTSS. A disordered region spans residues 21-87; sequence SFSSWRRSST…PPPASAPPRI (67 aa). Residues 90 to 145 form a Phorbol-ester/DAG-type zinc finger; it reads YHKMVPSKSKFRQCDVCEHIFIFDFVRKQHLDDVYACNVCGIRVHKGCLDRVKNDC. The disordered stretch occupies residues 172–196; that stretch reads TTASISKSLTTSPTCSTSTTMSPAG. Low complexity predominate over residues 177 to 193; that stretch reads SKSLTTSPTCSTSTTMS. Residues 248 to 528 form the Protein kinase domain; it reads VDVMTKIGDG…FQQIVKRITV (281 aa). The disordered stretch occupies residues 530–550; it reads MPRKESNKQKRRSTAHENPLF.

The protein belongs to the protein kinase superfamily. TKL Ser/Thr protein kinase family. Interacts with ndk-1.

In terms of biological role, probable inactive protein kinase which positively regulates Ras-mediated signaling probably acting at the level of let-60/ras or/and lin-45/raf. In the germline, regulates meiotic progression during oogenesis and mpk-1 (isoform b) phosphorylation. Plays a role in meiotic recombination events. Functions redundantly with ksr-1 in the Ras-mediated regulation of larval survival, the development of excretory canal, in determining vulval precursor cell fate during vulval induction and in mpk-1 phosphorylation in somatic cells. This Caenorhabditis elegans protein is Kinase suppressor of Ras B.